The chain runs to 138 residues: Histone H3-like centromeric protein A (138 aa).

Residues 1-40 (MGPRRQKRKPETPRRRPASPAPAAPRPTPSLGTSSRPLAR) are disordered. Glycine 2 is modified (n,N,N-trimethylglycine). Residue serine 19 is modified to Phosphoserine. The span at 19–28 (SPAPAAPRPT) shows a compositional bias: pro residues. An important for flexibility of DNA ends that protrude from nucleosomes region spans residues 37–52 (PLARRRHTVLKEIRTL). The interval 39–138 (ARRRHTVLKE…RIRGIQEGLG (100 aa)) is H3-like. Residues 73–114 (CVQFTRGVDFNWQAQALLALQEAAEAFLVHLFEDAYLLSLHA) are CATD.

It belongs to the histone H3 family. In terms of assembly, component of centromeric nucleosomes, where DNA is wrapped around a histone octamer core. The octamer contains two molecules each of H2A, H2B, CENPA and H4 assembled in one CENPA-H4 heterotetramer and two H2A-H2B heterodimers. CENPA modulates the DNA-binding characteristics of nucleosomes so that protruding DNA ends have higher flexibility than in nucleosomes containing conventional histone H3. Inhibits binding of histone H1 to nucleosomes, since histone H1 binds preferentially to rigid DNA linkers that protrude from nucleosomes. Nucleosomes containing CENPA also contain histone H2A variants such as MACROH2A and H2A.Z/H2AZ1. The CENPA-H4 heterotetramer is more compact and structurally more rigid than corresponding H3-H4 heterotetramers. Can assemble into nucleosomes that contain both CENPA and histone H3.3; these nucleosomes interact with a single CENPC chain. Heterotrimer composed of HJURP, CENPA and histone H4, where HJURP interacts with the dimer formed by CENPA and histone H4 and prevents tetramerization of CENPA and H4. Component of the CENPA-NAC complex, at least composed of CENPA, CENPC, CENPH, CENPM, CENPN, CENPT and CENPU. Interacts (via CATD domain) with HJURP; the interaction is direct and is required for its localization to centromeres. Interacts with CENPC, CENPN and CENPT; interaction is direct. Part of a centromere complex consisting of CENPA, CENPT and CENPW. Identified in centromere complexes containing histones H2A, H2B and H4, and at least CENPA, CENPB, CENPC, CENPT, CENPN, HJURP, SUPT16H, SSRP1 and RSF1. Can self-associate. The CENPA-H4 heterotetramer can bind DNA by itself (in vitro). Interacts with CDK1, PPP1CA and RBBP7. Post-translationally, trimethylated by NTMT1 at the N-terminal glycine after cleavage of Met-1. Methylation is low before incorporation into nucleosomes and increases with cell cycle progression, with the highest levels in mitotic nucleosomes. Poly-ADP-ribosylated by PARP1.

Its subcellular location is the nucleus. The protein resides in the chromosome. It is found in the centromere. Functionally, histone H3-like nucleosomal protein that is specifically found in centromeric nucleosomes. Replaces conventional H3 in the nucleosome core of centromeric chromatin that serves as an assembly site for the inner kinetochore. The presence of CENPA subtly modifies the nucleosome structure and the way DNA is wrapped around the nucleosome and gives rise to protruding DNA ends that are less well-ordered and rigid compared to nucleosomes containing histone H3. May serve as an epigenetic mark that propagates centromere identity through replication and cell division. Required for recruitment and assembly of kinetochore proteins, and as a consequence required for progress through mitosis, chromosome segregation and cytokinesis. The protein is Histone H3-like centromeric protein A (CENPA) of Bos taurus (Bovine).